A 618-amino-acid chain; its full sequence is Pyocin-S1 (618 aa).

It belongs to the colicin/pyosin nuclease family. As to quaternary structure, purified pyocin S1 makes up a complex of the two (large and small) proteins. The large protein, but not the pyocin complex, shows in vitro DNase activity.

Its function is as follows. Causes breakdown of chromosomal DNA as well as complete inhibition of lipid synthesis in sensitive cells. This is Pyocin-S1 (pys1) from Pseudomonas aeruginosa.